Here is a 212-residue protein sequence, read N- to C-terminus: Cyclin-dependent kinase inhibitor 3 (212 aa).

Positions Met1–Gln24 are disordered. The interaction with CDK2 stretch occupies residues Met1–Leu34. Positions Asp13–Gln24 are enriched in acidic residues. In terms of domain architecture, Tyrosine-protein phosphatase spans Leu32 to Ser201. Cys140 functions as the Phosphocysteine intermediate in the catalytic mechanism.

The protein belongs to the protein-tyrosine phosphatase family. Interacts with cyclin-dependent kinases such as CDK1, CDK2 and CDK3. Does not interact with CDK4. Interacts (via C-terminus) with phosphorylated CDK2 (via C-terminal helix). Interacts with MS4A3 (via C-terminus); the interaction enhances CDKN3 enzymatic activity.

It localises to the cytoplasm. The protein resides in the perinuclear region. The enzyme catalyses O-phospho-L-tyrosyl-[protein] + H2O = L-tyrosyl-[protein] + phosphate. It catalyses the reaction O-phospho-L-seryl-[protein] + H2O = L-seryl-[protein] + phosphate. It carries out the reaction O-phospho-L-threonyl-[protein] + H2O = L-threonyl-[protein] + phosphate. May play a role in cell cycle regulation. Dual specificity phosphatase active toward substrates containing either phosphotyrosine or phosphoserine residues. Dephosphorylates CDK2 at 'Thr-160' in a cyclin-dependent manner. In Rattus norvegicus (Rat), this protein is Cyclin-dependent kinase inhibitor 3.